Here is a 138-residue protein sequence, read N- to C-terminus: Nucleoside diphosphate kinase (138 aa).

Lys-9, Phe-57, Arg-85, Thr-91, Arg-102, and Asn-112 together coordinate ATP. The active-site Pros-phosphohistidine intermediate is the His-115.

Belongs to the NDK family. As to quaternary structure, homotetramer. Requires Mg(2+) as cofactor.

The protein resides in the cytoplasm. It carries out the reaction a 2'-deoxyribonucleoside 5'-diphosphate + ATP = a 2'-deoxyribonucleoside 5'-triphosphate + ADP. The enzyme catalyses a ribonucleoside 5'-diphosphate + ATP = a ribonucleoside 5'-triphosphate + ADP. Major role in the synthesis of nucleoside triphosphates other than ATP. The ATP gamma phosphate is transferred to the NDP beta phosphate via a ping-pong mechanism, using a phosphorylated active-site intermediate. The protein is Nucleoside diphosphate kinase of Deinococcus deserti (strain DSM 17065 / CIP 109153 / LMG 22923 / VCD115).